Consider the following 365-residue polypeptide: 1-acyl-sn-glycerol-3-phosphate acyltransferase epsilon (365 aa).

The helical transmembrane segment at 15–35 (LLPSVLLLGSAPTYLLAWTLW) threads the bilayer. Residues 93–98 (HQSTVD) carry the HXXXXD motif motif. Residues 345-365 (LYMGTWLYGTLLGCLWFVIKA) form a helical membrane-spanning segment.

The protein belongs to the 1-acyl-sn-glycerol-3-phosphate acyltransferase family. As to expression, widely expressed.

It is found in the endoplasmic reticulum membrane. The protein localises to the nucleus envelope. Its subcellular location is the mitochondrion. The catalysed reaction is a 1-acyl-sn-glycero-3-phosphate + an acyl-CoA = a 1,2-diacyl-sn-glycero-3-phosphate + CoA. The enzyme catalyses 1-(9Z-octadecenoyl)-sn-glycero-3-phosphate + tetradecanoyl-CoA = 1-(9Z)-octadecenoyl-2-tetradecanoyl-sn-glycero-3-phosphate + CoA. It catalyses the reaction pentadecanoyl-CoA + 1-(9Z-octadecenoyl)-sn-glycero-3-phosphate = 1-(9Z)-octadecenoyl-2-pentadecanoyl-sn-glycero-3-phosphate + CoA. It carries out the reaction 1-(9Z-octadecenoyl)-sn-glycero-3-phosphate + octadecanoyl-CoA = 1-(9Z-octadecenoyl)-2-octadecanoyl-sn-glycero-3-phosphate + CoA. The catalysed reaction is nonadecanoyl-CoA + 1-(9Z-octadecenoyl)-sn-glycero-3-phosphate = 1-(9Z)-octadecenoyl-2-nonadecanoyl-sn-glycero-3-phosphate + CoA. The enzyme catalyses 1-(9Z-octadecenoyl)-sn-glycero-3-phosphoethanolamine + (9Z)-octadecenoyl-CoA = 1,2-di-(9Z-octadecenoyl)-sn-glycero-3-phosphoethanolamine + CoA. It catalyses the reaction 1-(9Z-octadecenoyl)-sn-glycero-3-phosphocholine + (9Z)-octadecenoyl-CoA = 1,2-di-(9Z-octadecenoyl)-sn-glycero-3-phosphocholine + CoA. It carries out the reaction 1-(9Z-octadecenoyl)-sn-glycero-3-phospho-(1D-myo-inositol) + (5Z,8Z,11Z,14Z)-eicosatetraenoyl-CoA = 1-(9Z-octadecenoyl)-2-(5Z,8Z,11Z,14Z-eicosatetraenoyl)-sn-glycero-3-phospho-1D-myo-inositol + CoA. The catalysed reaction is 1-(9Z-octadecenoyl)-sn-glycero-3-phospho-L-serine + (9Z)-octadecenoyl-CoA = 1,2-di-(9Z)-octadecenoyl-sn-glycero-3-phospho-L-serine + CoA. The enzyme catalyses 1-(9Z-octadecenoyl)-sn-glycero-3-phospho-L-serine + (5Z,8Z,11Z,14Z)-eicosatetraenoyl-CoA = 1-(9Z-octadecenoyl)-2-(5Z,8Z,11Z,14Z-eicosatetraenoyl)-sn-glycero-3-phospho-L-serine + CoA. It catalyses the reaction 1-hexadecanoyl-sn-glycero-3-phosphate + (9Z)-octadecenoyl-CoA = 1-hexadecanoyl-2-(9Z-octadecenoyl)-sn-glycero-3-phosphate + CoA. It carries out the reaction 1-heptadecanoyl-sn-glycero-3-phosphate + (9Z)-octadecenoyl-CoA = 1-heptadecanoyl-2-(9Z)-octadecenoyl-sn-glycero-3-phosphate + CoA. The catalysed reaction is 1-(5Z,8Z,11Z,14Z-eicosatetraenoyl)-sn-glycero-3-phosphate + (9Z)-octadecenoyl-CoA = 1-(5Z,8Z,11Z,14Z)-eicosatetraenoyl-2-(9Z)-octadecenoyl-sn-glycero-3-phosphate + CoA. The enzyme catalyses 1-octadecanoyl-sn-glycero-3-phosphate + (9Z)-octadecenoyl-CoA = 1-octadecanoyl-2-(9Z-octadecenoyl)-sn-glycero-3-phosphate + CoA. It catalyses the reaction 1-(9Z-octadecenoyl)-sn-glycero-3-phosphate + (5Z,8Z,11Z,14Z)-eicosatetraenoyl-CoA = 1-(9Z)-octadecenoyl-2-(5Z,8Z,11Z,14Z)-eicosatetraenoyl-sn-glycero-3-phosphate + CoA. It carries out the reaction heptadecanoyl-CoA + 1-(9Z-octadecenoyl)-sn-glycero-3-phosphate = 1-(9Z)-octadecenoyl-2-heptadecanoyl-sn-glycero-3-phosphate + CoA. The catalysed reaction is 1-(9Z-octadecenoyl)-sn-glycero-3-phosphocholine + (5Z,8Z,11Z,14Z)-eicosatetraenoyl-CoA = 1-(9Z)-octadecenoyl-2-(5Z,8Z,11Z,14Z)-icosatetraenoyl-sn-glycero-3-phosphocholine + CoA. The enzyme catalyses 1-(9Z-octadecenoyl)-sn-glycero-3-phosphate + (9Z)-octadecenoyl-CoA = 1,2-di-(9Z-octadecenoyl)-sn-glycero-3-phosphate + CoA. It catalyses the reaction 1-(9Z-octadecenoyl)-sn-glycero-3-phosphate + hexadecanoyl-CoA = 1-hexadecanoyl-2-(9Z-octadecenoyl)-sn-glycero-3-phosphate + CoA. The protein operates within phospholipid metabolism; CDP-diacylglycerol biosynthesis; CDP-diacylglycerol from sn-glycerol 3-phosphate: step 2/3. Converts 1-acyl-sn-glycerol-3-phosphate (lysophosphatidic acid or LPA) into 1,2-diacyl-sn-glycerol-3-phosphate (phosphatidic acid or PA) by incorporating an acyl moiety at the sn-2 position of the glycerol backbone. Acts on LPA containing saturated or unsaturated fatty acids C15:0-C20:4 at the sn-1 position using C18:1-CoA as the acyl donor. Also acts on lysophosphatidylethanolamine using oleoyl-CoA, but not arachidonoyl-CoA, and lysophosphatidylinositol using arachidonoyl-CoA, but not oleoyl-CoA. Activity toward lysophosphatidylglycerol not detectable. In Mus musculus (Mouse), this protein is 1-acyl-sn-glycerol-3-phosphate acyltransferase epsilon (Agpat5).